A 212-amino-acid chain; its full sequence is Large ribosomal subunit protein uL4 (212 aa).

The protein belongs to the universal ribosomal protein uL4 family. In terms of assembly, part of the 50S ribosomal subunit.

Its function is as follows. One of the primary rRNA binding proteins, this protein initially binds near the 5'-end of the 23S rRNA. It is important during the early stages of 50S assembly. It makes multiple contacts with different domains of the 23S rRNA in the assembled 50S subunit and ribosome. In terms of biological role, forms part of the polypeptide exit tunnel. The sequence is that of Large ribosomal subunit protein uL4 from Caulobacter vibrioides (strain ATCC 19089 / CIP 103742 / CB 15) (Caulobacter crescentus).